The sequence spans 529 residues: Ribonuclease Y (529 aa).

Residues 4–24 (GLIYISLEVLVACLITALIMY) form a helical membrane-spanning segment. One can recognise a KH domain in the interval 216–297 (LTTRIALPCS…NRIEEVYHRV (82 aa)). One can recognise an HD domain in the interval 342–435 (ALQHSKEVAL…VCAADALSAG (94 aa)).

The protein belongs to the RNase Y family.

The protein resides in the cell membrane. Functionally, endoribonuclease that initiates mRNA decay. This Helicobacter pylori (strain HPAG1) protein is Ribonuclease Y.